The following is a 168-amino-acid chain: MATATYPPPPPYYRLYKDYSENPNSAPEPPPPIEGTYVCFGGNYTTEDVLPSLEEQGVPQLYPKDSNLDYKNELRSLNRELQLHILELADVLVDRPSQYAKRIGEISSIFKNLHHLLNSLRPHQARATLIHIMELQIQQRKQAVEDIKRRREEAQRLLKDAYLTLDGQ.

Coiled coils occupy residues 64–92 (KDSN…ADVL) and 132–166 (IMEL…LTLD).

The protein belongs to the Mediator complex subunit 7 family. Component of the Mediator complex. Interacts with MEE14/CBP1.

The protein localises to the nucleus. Its function is as follows. Component of the Mediator complex, a coactivator involved in the regulated transcription of nearly all RNA polymerase II-dependent genes. Mediator functions as a bridge to convey information from gene-specific regulatory proteins to the basal RNA polymerase II transcription machinery. The Mediator complex, having a compact conformation in its free form, is recruited to promoters by direct interactions with regulatory proteins and serves for the assembly of a functional pre-initiation complex with RNA polymerase II and the general transcription factors. The polypeptide is Mediator of RNA polymerase II transcription subunit 7a (MED7A) (Arabidopsis thaliana (Mouse-ear cress)).